The primary structure comprises 964 residues: Glycine dehydrogenase (decarboxylating) (964 aa).

Residues 1–11 show a composition bias toward polar residues; that stretch reads MNSTLQNQTKT. A disordered region spans residues 1–21; it reads MNSTLQNQTKTNLEKVGTDPL. Lys713 is modified (N6-(pyridoxal phosphate)lysine).

The protein belongs to the GcvP family. As to quaternary structure, the glycine cleavage system is composed of four proteins: P, T, L and H. It depends on pyridoxal 5'-phosphate as a cofactor.

It catalyses the reaction N(6)-[(R)-lipoyl]-L-lysyl-[glycine-cleavage complex H protein] + glycine + H(+) = N(6)-[(R)-S(8)-aminomethyldihydrolipoyl]-L-lysyl-[glycine-cleavage complex H protein] + CO2. The glycine cleavage system catalyzes the degradation of glycine. The P protein binds the alpha-amino group of glycine through its pyridoxal phosphate cofactor; CO(2) is released and the remaining methylamine moiety is then transferred to the lipoamide cofactor of the H protein. This chain is Glycine dehydrogenase (decarboxylating), found in Leptospira interrogans serogroup Icterohaemorrhagiae serovar Lai (strain 56601).